A 202-amino-acid polypeptide reads, in one-letter code: Holliday junction resolvase RecU (202 aa).

Mg(2+) is bound by residues T85, D87, E100, and Q119.

The protein belongs to the RecU family. The cofactor is Mg(2+).

The protein localises to the cytoplasm. It catalyses the reaction Endonucleolytic cleavage at a junction such as a reciprocal single-stranded crossover between two homologous DNA duplexes (Holliday junction).. Its function is as follows. Endonuclease that resolves Holliday junction intermediates in genetic recombination. Cleaves mobile four-strand junctions by introducing symmetrical nicks in paired strands. Promotes annealing of linear ssDNA with homologous dsDNA. Required for DNA repair, homologous recombination and chromosome segregation. The polypeptide is Holliday junction resolvase RecU (Streptococcus uberis (strain ATCC BAA-854 / 0140J)).